A 508-amino-acid polypeptide reads, in one-letter code: MGLPWYRVHTVVLNDPGRLLSVHIMHTALVSGWAGSMALYELAVFDPSDPVLDPMWRQGMFVIPFMTRLGITNSWGGWSISGGTVTNPGIWSYEGVAGAHIVFSGLCFLAAIWHWVYWDLEIFCDERTGKPSLDLPKIFGIHLFLAGVACFGFGAFHVTGLYGPGIWVSDPYGLTGKVQAVNPVWGAEGFDPFVPGGIASHHIAAGTLGILAGLFHLSVRPPQRLYKGLRMGNIETVLSSSIAAVFFAAFVVAGTMWYGSATTPIELFGPTRYQWDQGYFQQEIYRRVSDGLAENLSLSEAWSKIPEKLAFYDYIGNNPAKGGLFRAGSMDNGDGIAVGWLGHPIFRDKEGRELFVRRMPTFFETFPVVLVDEEGIVRADVPFRRAESKYSVEQVGVTVEFYGGELNGVSYSDPATVKKYARRSQLGEIFELDRATLKSDGVFRSSPRGWFTFGHATFALLFFFGHIWHGARTLFRDVFAGIDPDLDAQVEFGTFQKVGDPTTRRQPV.

6 helical membrane passes run Ser21–Ser36, Ile101–Trp115, Gly140–Phe156, Ile203–Ser218, Val237–Val252, and Thr457–Arg472.

Belongs to the PsbB/PsbC family. PsbB subfamily. As to quaternary structure, PSII is composed of 1 copy each of membrane proteins PsbA, PsbB, PsbC, PsbD, PsbE, PsbF, PsbH, PsbI, PsbJ, PsbK, PsbL, PsbM, PsbT, PsbX, PsbY, PsbZ, Psb30/Ycf12, at least 3 peripheral proteins of the oxygen-evolving complex and a large number of cofactors. It forms dimeric complexes. Binds multiple chlorophylls. PSII binds additional chlorophylls, carotenoids and specific lipids. serves as cofactor.

It is found in the plastid. It localises to the chloroplast thylakoid membrane. Its function is as follows. One of the components of the core complex of photosystem II (PSII). It binds chlorophyll and helps catalyze the primary light-induced photochemical processes of PSII. PSII is a light-driven water:plastoquinone oxidoreductase, using light energy to abstract electrons from H(2)O, generating O(2) and a proton gradient subsequently used for ATP formation. The sequence is that of Photosystem II CP47 reaction center protein from Oryza sativa subsp. indica (Rice).